The sequence spans 307 residues: MSLLTLPQAKLSELSLRQRLSHYQQNYLWEEGKLELTVSEPPSSLNCILQLQWKGTHFTLYCFGNDLANWLTADLLGAPFFTLPKELQLALLERQTVFLPKLVCNDIATASLSVTQPLLSLRLSRDNAHISFWLTSAEALFALLPARPNSERIPLPILISLRWHKVYLTLDEVDSLRLGDVLLAPEGSGPNSPVLAYVGENPWGYFQLQSNKLEFIGMSHESDELNPEPLTDLNQLPVQVSFEVGRQILDWHTLTSLEPGSLIDLTTPVDGEVRLLANGRLLGHGRLVEIQGRLGVRIERLTEVTIS.

Belongs to the FliN/MopA/SpaO family.

Functionally, component of the Yop secretion machinery. This Yersinia pestis protein is Yop proteins translocation protein Q (yscQ).